Consider the following 132-residue polypeptide: MDVTRLLLATLLVFLCFFTAYSHPPPEEKLRDDRSLRSNSSVNLLDFPSVSIVALNKKSKQISRKEAEKKRSSKKEASMKKVARPRTPLSAPCVATRDSCKPPAPACCDPCASCQCRFFRSACSCRVLSLNC.

The signal sequence occupies residues 1–22 (MDVTRLLLATLLVFLCFFTAYS). N-linked (GlcNAc...) asparagine glycosylation is present at asparagine 39. Residues 62 to 88 (ISRKEAEKKRSSKKEASMKKVARPRTP) form a disordered region. The segment covering 63-79 (SRKEAEKKRSSKKEASM) has biased composition (basic and acidic residues). 5 disulfides stabilise this stretch: cysteine 93-cysteine 108, cysteine 100-cysteine 114, cysteine 107-cysteine 125, cysteine 111-cysteine 132, and cysteine 116-cysteine 123. In terms of domain architecture, Agouti spans 93–132 (CVATRDSCKPPAPACCDPCASCQCRFFRSACSCRVLSLNC).

The protein resides in the secreted. Functionally, involved in the regulation of melanogenesis. The binding of ASP to MC1R precludes alpha-MSH initiated signaling and thus blocks production of cAMP, leading to a down-regulation of eumelanogenesis (brown/black pigment) and thus increasing synthesis of pheomelanin (yellow/red pigment). The polypeptide is Agouti-signaling protein (ASIP) (Macaca radiata (Bonnet macaque)).